Here is a 271-residue protein sequence, read N- to C-terminus: Phosphatidylglycerol--prolipoprotein diacylglyceryl transferase (271 aa).

The next 7 helical transmembrane spans lie at 21–41 (ISVR…MWLA), 60–80 (LLFA…VLFY), 95–115 (VWTG…AMLW), 124–144 (FFGV…VGRL), 176–196 (SQLY…NWFI), 203–223 (GSVS…VEYV), and 230–250 (LGLF…MIIG). Residue Arg-143 coordinates a 1,2-diacyl-sn-glycero-3-phospho-(1'-sn-glycerol).

This sequence belongs to the Lgt family.

Its subcellular location is the cell inner membrane. The enzyme catalyses L-cysteinyl-[prolipoprotein] + a 1,2-diacyl-sn-glycero-3-phospho-(1'-sn-glycerol) = an S-1,2-diacyl-sn-glyceryl-L-cysteinyl-[prolipoprotein] + sn-glycerol 1-phosphate + H(+). Its pathway is protein modification; lipoprotein biosynthesis (diacylglyceryl transfer). Functionally, catalyzes the transfer of the diacylglyceryl group from phosphatidylglycerol to the sulfhydryl group of the N-terminal cysteine of a prolipoprotein, the first step in the formation of mature lipoproteins. In Vibrio vulnificus (strain CMCP6), this protein is Phosphatidylglycerol--prolipoprotein diacylglyceryl transferase.